Here is a 1307-residue protein sequence, read N- to C-terminus: CRISPR-associated endonuclease Cas12a (1307 aa).

Residues 1–35 (MTQFEGFTNLYQVSKTLRFELIPQGKTLKHIQEQG) form a WED-I (OBD-I) region. The tract at residues 36-320 (FIEEDKARND…SDRNTLSFIL (285 aa)) is REC1 (helical-I). 47–51 (YKELK) provides a ligand contact to crRNA. A coiled-coil region spans residues 74–106 (ENLSAAIDSYRKEKTEETRNALIEEQATYRNAI). CrRNA-binding positions include 175–176 (NR) and 307–310 (KQIL). Residues 321–526 (EEFKSDEEVI…ARNYATKKPY (206 aa)) are WED-II (helical-II). The WED-II (OBD-I) stretch occupies residues 527–598 (SVEKFKLNFQ…GFDKMYYDYF (72 aa)). Residues 599–607 (PDAAKMIPK) constitute a DNA-binding region (PAM-binding on target DNA). Positions 599–718 (PDAAKMIPKC…EYYAELNPLL (120 aa)) are PI (LHD). The interval 719-884 (YHISFQRIAE…ITLNYQAANS (166 aa)) is WED-III (OBD-III). 752 to 761 (KGHHGKPNLH) is a crRNA binding site. The segment at residues 780–783 (KLNG) is a DNA-binding region (target DNA). His-800 (for pre-crRNA processing) is an active-site residue. 806–808 (MLN) serves as a coordination point for crRNA. Catalysis depends on for pre-crRNA processing residues Lys-809 and Lys-860. The interval 885–940 (PSKFNQRVNAYLKEHPETPIIGIDRGERNLIYITVIDSTGKILEQRSLNTIQQFDY) is ruvC-I. Asp-908 acts as the For DNase activity of RuvC domain in catalysis. Positions 941 to 957 (QKKLDNREKERVAARQA) are bridge helix. Positions 951-968 (RVAARQAWSVVGTIKDLK) form a DNA-binding region, target DNA. The tract at residues 958–1066 (WSVVGTIKDL…TQSGFLFYVP (109 aa)) is ruvC-II. Catalysis depends on Glu-993, which acts as the For DNase activity of RuvC domain. The target DNA DNA-binding region spans 1051-1053 (SFA). A nuclease domain region spans residues 1067–1262 (APYTSKIDPL…FQNPEWPMDA (196 aa)). Residue Arg-1226 is the For DNase activity of nuclease domain of the active site. Asp-1263 acts as the For DNase activity of RuvC domain in catalysis. The segment at 1263-1307 (DANGAYHIALKGQLLLNHLKESKDLKLQNGISNQDWLAYIQELRN) is ruvC-III.

This sequence belongs to the CRISPR-associated endonuclease Cas12a family. As to quaternary structure, monomer. The cofactor is Mg(2+).

The enzyme catalyses Endonucleolytic cleavage to 5'-phosphodinucleotide and 5'-phosphooligonucleotide end-products.. The catalysed reaction is RNA = a 5'-hydroxy-ribonucleotide + n nucleoside-2',3'-cyclophosphates.. CRISPR (clustered regularly interspaced short palindromic repeat), is an adaptive immune system that provides protection against mobile genetic elements (viruses, transposable elements and conjugative plasmids). CRISPR clusters contain sequences complementary to antecedent mobile elements and target invading nucleic acids. CRISPR clusters are transcribed and processed into CRISPR RNA (crRNA). Recognizes a short motif in the CRISPR repeat sequences (the 5' PAM or protospacer adjacent motif, TTTN in this organism) to help distinguish self versus nonself, as targets within the bacterial CRISPR locus do not have PAMs. Has dsDNA endonuclease activity, results in staggered 4-base 5' overhangs 19 and 22 bases downstream of the PAM on the non-targeted and targeted strand respectively. Non-target strand cleavage by the RuvC domain is probably a prerequisite of target strand cleavage by the Nuc domain. Protects E.coli against plasmids and bacteriophage M13mp18, phage T4 with hydroxymethyl or unmodified (but not glycosylated) cytosines and to a lesser extent against lambda and VpaE1 phage. In this CRISPR system correct processing of pre-crRNA requires only this protein and the CRISPR locus. The polypeptide is CRISPR-associated endonuclease Cas12a (Acidaminococcus sp. (strain BV3L6)).